The following is a 143-amino-acid chain: METNFSFDSNLIVIIIITLFATRIIAKRFLSTPKMVSQETVAHVKDLIGQKEVFVAAKTYCPYCKATLSTLFQELNVPKSKALVLELDEMSNGSEIQDALEEISGQKTVPNVYINGKHIGGNSDLETLKKNGKLAEILKPVFQ.

A mitochondrion-targeting transit peptide spans methionine 1–leucine 30. Serine 37 is subject to Phosphoserine. One can recognise a Glutaredoxin domain in the interval valine 41 to glutamine 143. Residue lysine 58–tyrosine 63 coordinates glutathione. Residue cysteine 61 is modified to S-glutathionyl cysteine; alternate. Cysteine 61 and cysteine 64 are oxidised to a cystine. Serine 91 is subject to Phosphoserine. Glutathione-binding positions include valine 109 and asparagine 122–serine 123.

It belongs to the glutaredoxin family.

The protein resides in the cytoplasm. Its subcellular location is the mitochondrion. The catalysed reaction is 2 glutathione + H2O2 = glutathione disulfide + 2 H2O. The enzyme catalyses 1-chloro-2,4-dinitrobenzene + glutathione = 2,4-dinitrophenyl-S-glutathione + chloride + H(+). It catalyses the reaction RX + glutathione = an S-substituted glutathione + a halide anion + H(+). Component of the glutathione system which performs several activities such as glutathione-dependent oxidoreductase, glutathione peroxidase and glutathione S-transferase (GST) activity. The disulfide bond functions as an electron carrier in the glutathione-dependent synthesis of deoxyribonucleotides by the enzyme ribonucleotide reductase. In addition, it is also involved in reducing cytosolic protein- and non-protein-disulfides in a coupled system with glutathione reductase. Required for resistance to reactive oxygen species (ROS) by directly reducing hydroperoxides and for the detoxification of ROS-mediated damage. GRX2 is more active as an oxidoreductase than GRX1. Responsible for the S-glutathionylation of DHBP synthase. This Saccharomyces cerevisiae (strain ATCC 204508 / S288c) (Baker's yeast) protein is Glutaredoxin-2 (GRX2).